The primary structure comprises 501 residues: MEQQDQSMKEGRLTLVLALATLIAAFGSSFQYGYNVAAVNSPALLMQQFYNETYYGRTGEFMEDFPLTLLWSVTVSMFPFGGFIGSLLVGPLVNKFGRKGALLFNNIFSIVPAILMGCSRVAKSFELIIISRLLVGICAGVSSNVVPMYLGELAPKNLRGALGVVPQLFITVGILVAQIFGLRNLLANVDGWPILLGLTGVPAALQLVLLPFFPESPRYLLIQKKDEAAAKKALQTLRGWDSVDREVAEIRQEDEAEKAAGFISVLKLFRMRSLRWQLLSIIVLMGGQQLSGVNAIYYYADQIYLSAGVPKEHVQFVTAGTGAVNVVMTFCAVFVVELLGRRLLLLLGFSICLVACCVLTAALALQDTVSWMPYISIVCVISYVIGHALGPSPIPALLITEIFLQSSRPSAFMVGGSVHWLSNFTVGLIFPFIQEGLGPYSFIVFAVICLLTTIYIFLIVPETKAKTFIEINQIFTKMNKVSEVYPEKEELKELPPVTLEQ.

Residue Met1 is modified to N-acetylmethionine. Topologically, residues 1 to 18 (MEQQDQSMKEGRLTLVLA) are cytoplasmic. The chain crosses the membrane as a helical span at residues 19 to 39 (LATLIAAFGSSFQYGYNVAAV). Residue Tyr32 coordinates D-fructose. Topologically, residues 40 to 68 (NSPALLMQQFYNETYYGRTGEFMEDFPLT) are extracellular. Asn51 is a glycosylation site (N-linked (GlcNAc...) asparagine). The helical transmembrane segment at 69–91 (LLWSVTVSMFPFGGFIGSLLVGP) threads the bilayer. The Cytoplasmic portion of the chain corresponds to 92-98 (LVNKFGR). A helical transmembrane segment spans residues 99-119 (KGALLFNNIFSIVPAILMGCS). At 120 to 126 (RVAKSFE) the chain is on the extracellular side. Residues 127–149 (LIIISRLLVGICAGVSSNVVPMY) form a helical membrane-spanning segment. At 150 to 161 (LGELAPKNLRGA) the chain is on the cytoplasmic side. A helical membrane pass occupies residues 162-182 (LGVVPQLFITVGILVAQIFGL). Position 167 (Gln167) interacts with D-fructose. Residues 183–192 (RNLLANVDGW) lie on the Extracellular side of the membrane. The chain crosses the membrane as a helical span at residues 193 to 213 (PILLGLTGVPAALQLVLLPFF). Topologically, residues 214-277 (PESPRYLLIQ…LFRMRSLRWQ (64 aa)) are cytoplasmic. The helical transmembrane segment at 278–298 (LLSIIVLMGGQQLSGVNAIYY) threads the bilayer. D-fructose-binding positions include Gln288 and 296 to 298 (IYY). The Extracellular portion of the chain corresponds to 299–313 (YADQIYLSAGVPKEH). Residues 314–334 (VQFVTAGTGAVNVVMTFCAVF) traverse the membrane as a helical segment. Residues 335–342 (VVELLGRR) lie on the Cytoplasmic side of the membrane. The chain crosses the membrane as a helical span at residues 343-363 (LLLLLGFSICLVACCVLTAAL). Residues 364–371 (ALQDTVSW) are Extracellular-facing. Residues 372–394 (MPYISIVCVISYVIGHALGPSPI) traverse the membrane as a helical segment. His387 serves as a coordination point for D-fructose. The Cytoplasmic segment spans residues 395–412 (PALLITEIFLQSSRPSAF). The chain crosses the membrane as a helical span at residues 413–433 (MVGGSVHWLSNFTVGLIFPFI). A D-fructose-binding site is contributed by 419–420 (HW). Residues 434-439 (QEGLGP) lie on the Extracellular side of the membrane. The helical transmembrane segment at 440–460 (YSFIVFAVICLLTTIYIFLIV) threads the bilayer. Residues 461–501 (PETKAKTFIEINQIFTKMNKVSEVYPEKEELKELPPVTLEQ) lie on the Cytoplasmic side of the membrane.

Belongs to the major facilitator superfamily. Sugar transporter (TC 2.A.1.1) family. Glucose transporter subfamily.

Its subcellular location is the apical cell membrane. It is found in the cell membrane. The protein localises to the sarcolemma. It catalyses the reaction D-fructose(out) = D-fructose(in). Functions as a fructose transporter that has only low activity with other monosaccharides. Can mediate the uptake of deoxyglucose, but with low efficiency. Essential for fructose uptake in the small intestine. Plays a role in the regulation of salt uptake and blood pressure in response to dietary fructose. Required for the development of high blood pressure in response to high dietary fructose intake. This is Solute carrier family 2, facilitated glucose transporter member 5 from Pongo abelii (Sumatran orangutan).